We begin with the raw amino-acid sequence, 131 residues long: Large ribosomal subunit protein bL19 (131 aa).

Residues 111-124 (RIAERAERGSEKGK) show a composition bias toward basic and acidic residues. The segment at 111 to 131 (RIAERAERGSEKGKTTPAAAE) is disordered.

It belongs to the bacterial ribosomal protein bL19 family.

In terms of biological role, this protein is located at the 30S-50S ribosomal subunit interface and may play a role in the structure and function of the aminoacyl-tRNA binding site. This chain is Large ribosomal subunit protein bL19, found in Methylobacterium nodulans (strain LMG 21967 / CNCM I-2342 / ORS 2060).